The sequence spans 87 residues: Retinal rod rhodopsin-sensitive cGMP 3',5'-cyclic phosphodiesterase subunit gamma (87 aa).

The residue at position 1 (Met-1) is an N-acetylmethionine. Residues 1–12 (MNLEPPKAEIRS) are compositionally biased toward basic and acidic residues. The segment at 1-55 (MNLEPPKAEIRSATRVIGGPVTPRKGPPKFKQRQTRQFKSKPPKKGVQGFGDDIP) is disordered. Basic residues predominate over residues 26–44 (GPPKFKQRQTRQFKSKPPK).

It belongs to the rod/cone cGMP-PDE gamma subunit family. Oligomer composed of two catalytic chains (alpha and beta), an inhibitory chain (gamma) and the delta chain.

The catalysed reaction is 3',5'-cyclic GMP + H2O = GMP + H(+). In terms of biological role, participates in processes of transmission and amplification of the visual signal. cGMP-PDEs are the effector molecules in G-protein-mediated phototransduction in vertebrate rods and cones. The chain is Retinal rod rhodopsin-sensitive cGMP 3',5'-cyclic phosphodiesterase subunit gamma (PDE6G) from Canis lupus familiaris (Dog).